The primary structure comprises 300 residues: Protoheme IX farnesyltransferase (300 aa).

Transmembrane regions (helical) follow at residues Val-24–Val-44, Trp-46–Ile-66, Pro-94–Phe-114, Leu-118–Leu-138, Ile-146–Gly-166, Ala-172–Leu-192, Leu-217–Gly-237, Ser-239–Trp-259, and Ile-278–Leu-298.

This sequence belongs to the UbiA prenyltransferase family. Protoheme IX farnesyltransferase subfamily.

Its subcellular location is the cell inner membrane. The catalysed reaction is heme b + (2E,6E)-farnesyl diphosphate + H2O = Fe(II)-heme o + diphosphate. The protein operates within porphyrin-containing compound metabolism; heme O biosynthesis; heme O from protoheme: step 1/1. Functionally, converts heme B (protoheme IX) to heme O by substitution of the vinyl group on carbon 2 of heme B porphyrin ring with a hydroxyethyl farnesyl side group. In Burkholderia lata (strain ATCC 17760 / DSM 23089 / LMG 22485 / NCIMB 9086 / R18194 / 383), this protein is Protoheme IX farnesyltransferase.